A 64-amino-acid polypeptide reads, in one-letter code: uncharacterized protein (64 aa).

This is an uncharacterized protein from Bos taurus (Bovine).